Reading from the N-terminus, the 267-residue chain is Dichloromethane dehalogenase (267 aa).

The region spanning 3 to 85 is the GST N-terminal domain; the sequence is TKLRYLHHPA…YLSEKYDCSS (83 aa). A GST C-terminal domain is found at 91-224; sequence TLEERGHIQQ…AWQYENVRKY (134 aa).

Belongs to the GST superfamily. In terms of assembly, homohexamer.

The protein localises to the cytoplasm. It catalyses the reaction dichloromethane + H2O = formaldehyde + 2 chloride + 2 H(+). It functions in the pathway xenobiotic degradation; dichloromethane degradation. In Methylophilus leisingeri (strain DSM 6813 / VKM B-2013 / DM11), this protein is Dichloromethane dehalogenase (dcmA).